Consider the following 901-residue polypeptide: Protein SOK1 (901 aa).

3 disordered regions span residues 1–87 (MDQP…QNII), 106–139 (RSSGVITPSMSLNASTNATNNDSSGNSANSSDLK), and 162–231 (NDDN…NASN). Positions 10–51 (PTTASNPAPSSTNSSSAPSATNSKQERSSSSLSKPSSVVPSK) are enriched in low complexity. S40 and S53 each carry phosphoserine. Composition is skewed to polar residues over residues 74–87 (GDTSTLDGSSQNII) and 106–115 (RSSGVITPSM). A compositionally biased stretch (low complexity) spans 116 to 138 (SLNASTNATNNDSSGNSANSSDL). Phosphoserine is present on residues S191 and S193. Residues 220–231 (AAQQQPPGNASN) are compositionally biased toward polar residues. S245 carries the post-translational modification Phosphoserine.

Belongs to the TCP11 family.

It localises to the nucleus. In terms of biological role, high copy suppressor of a cyclic AMP-dependent protein kinase mutant. In Saccharomyces cerevisiae (strain ATCC 204508 / S288c) (Baker's yeast), this protein is Protein SOK1 (SOK1).